Here is a 154-residue protein sequence, read N- to C-terminus: Methylglyoxal synthase (154 aa).

The region spanning 1 to 154 (MELTTRTIAA…RYMQQRLDLK (154 aa)) is the MGS-like domain. Substrate is bound by residues histidine 19, lysine 23, 45-48 (TGTT), and 65-66 (SG). The Proton donor/acceptor role is filled by aspartate 71. A substrate-binding site is contributed by histidine 98.

It belongs to the methylglyoxal synthase family.

The catalysed reaction is dihydroxyacetone phosphate = methylglyoxal + phosphate. Its function is as follows. Catalyzes the formation of methylglyoxal from dihydroxyacetone phosphate. This chain is Methylglyoxal synthase, found in Yersinia pseudotuberculosis serotype O:1b (strain IP 31758).